A 270-amino-acid chain; its full sequence is Palmitoyltransferase ZDHHC12-A (270 aa).

Residues 1–8 (MNKSLFKS) lie on the Cytoplasmic side of the membrane. A helical membrane pass occupies residues 9–29 (GCLVRTAHVILTWIITLILFL). Residues 30 to 45 (HNTDLRRCQERGDLLQ) lie on the Lumenal side of the membrane. The chain crosses the membrane as a helical span at residues 46–66 (PLVFSSVLLLSVLLYFTVSLM). Residues 67 to 145 (DPGFVLSDSQ…DNCVGELNHR (79 aa)) lie on the Cytoplasmic side of the membrane. The 51-residue stretch at 102–152 (RRCGYCFLLQPMRARHCKWCKRCVRRFDHHCPWIDNCVGELNHRWFLLYLC) folds into the DHHC domain. The active-site S-palmitoyl cysteine intermediate is the C132. A helical transmembrane segment spans residues 146 to 166 (WFLLYLCVQFTAVCWGLQSAW). The Lumenal portion of the chain corresponds to 167-182 (SGFISAPSWQQWFTQN). The helical transmembrane segment at 183–203 (VFLLVAFAVTAVFSVVLLLLL) threads the bilayer. Over 204 to 270 (CIHAYLASVN…MYIRHNNASV (67 aa)) the chain is Cytoplasmic.

This sequence belongs to the DHHC palmitoyltransferase family.

Its subcellular location is the golgi apparatus membrane. It is found in the endoplasmic reticulum membrane. It carries out the reaction L-cysteinyl-[protein] + hexadecanoyl-CoA = S-hexadecanoyl-L-cysteinyl-[protein] + CoA. Functionally, palmitoyltransferase that catalyzes the addition of palmitate onto various protein substrates. Has a palmitoyltransferase activity toward gephyrin/GPHN, regulating its clustering at synapses and its function in gamma-aminobutyric acid receptor clustering. Acts as an inhibitor of the NLRP3 inflammasome by mediating palmitoylation of NLRP3, thereby promoting NLRP3 degradation by the chaperone-mediated autophagy (CMA) process. In Danio rerio (Zebrafish), this protein is Palmitoyltransferase ZDHHC12-A.